The chain runs to 394 residues: GTPase Obg (394 aa).

The Obg domain occupies 4-162 (SNFVDYVKIY…LMVILELKLL (159 aa)). The region spanning 163-329 (ADVGLVGFPN…LKDILWTELN (167 aa)) is the OBG-type G domain. GTP contacts are provided by residues 169 to 176 (GFPNAGKS), 194 to 198 (FTTLE), 216 to 219 (DIPG), 283 to 286 (TKSD), and 310 to 312 (SSV). Mg(2+) contacts are provided by Ser-176 and Thr-196. Residues 358–394 (KDMGEDEDFEYEYEEDADDDFDYEYEDENWDEEEEKK) are disordered. A compositionally biased stretch (acidic residues) spans 361 to 394 (GEDEDFEYEYEEDADDDFDYEYEDENWDEEEEKK).

The protein belongs to the TRAFAC class OBG-HflX-like GTPase superfamily. OBG GTPase family. As to quaternary structure, monomer. The cofactor is Mg(2+).

It is found in the cytoplasm. Its function is as follows. An essential GTPase which binds GTP, GDP and possibly (p)ppGpp with moderate affinity, with high nucleotide exchange rates and a fairly low GTP hydrolysis rate. Plays a role in control of the cell cycle, stress response, ribosome biogenesis and in those bacteria that undergo differentiation, in morphogenesis control. The sequence is that of GTPase Obg from Phocaeicola vulgatus (strain ATCC 8482 / DSM 1447 / JCM 5826 / CCUG 4940 / NBRC 14291 / NCTC 11154) (Bacteroides vulgatus).